Consider the following 192-residue polypeptide: Ion-translocating oxidoreductase complex subunit B (192 aa).

The interval 1–26 (MNTIWIAVGALTLLGLVFGAILGYAS) is hydrophobic. The region spanning 32-91 (EDDPVVEKIDAILPQSQCGQCGYPGCRPYAEAVGLQGEKINRCAPGGEAVMLKIAELLNV) is the 4Fe-4S domain. Cys-49, Cys-52, Cys-57, Cys-74, Cys-117, Cys-120, Cys-123, Cys-127, Cys-147, Cys-150, Cys-153, and Cys-157 together coordinate [4Fe-4S] cluster. 4Fe-4S ferredoxin-type domains lie at 108 to 137 (MLAV…GATR) and 138 to 167 (AMHT…LRPV).

Belongs to the 4Fe4S bacterial-type ferredoxin family. RnfB subfamily. In terms of assembly, the complex is composed of six subunits: RsxA, RsxB, RsxC, RsxD, RsxE and RsxG. [4Fe-4S] cluster serves as cofactor.

The protein resides in the cell inner membrane. Its function is as follows. Part of a membrane-bound complex that couples electron transfer with translocation of ions across the membrane. Required to maintain the reduced state of SoxR. This Salmonella dublin (strain CT_02021853) protein is Ion-translocating oxidoreductase complex subunit B.